Reading from the N-terminus, the 457-residue chain is DDB1- and CUL4-associated factor 10 (457 aa).

WD repeat units follow at residues 65–104, 108–146, 150–189, and 195–234; these read RTHG…HIKT, AHED…SKAC, GHTS…EDGC, and FHTR…KSLE. The segment covering 246 to 265 has biased composition (low complexity); it reads TASTSDMTSTSSETRPSSSP. Residues 246-304 form a disordered region; it reads TASTSDMTSTSSETRPSSSPCHNSDSGPLFEKHMSRSSQREGTSPRNSLEVLTPEVPGE. Positions 281–292 are enriched in polar residues; that stretch reads RSSQREGTSPRN. WD repeat units follow at residues 306–346, 368–406, and 424–457; these read DRGN…QEGT, VGRG…KELV, and SHKD…QPKF.

This sequence belongs to the WD repeat DCAF10 family.

It participates in protein modification; protein ubiquitination. In terms of biological role, may function as a substrate receptor for CUL4-DDB1 E3 ubiquitin-protein ligase complex. The polypeptide is DDB1- and CUL4-associated factor 10 (dcaf10) (Xenopus laevis (African clawed frog)).